Consider the following 355-residue polypeptide: Beta-porphyranase C (355 aa).

An N-terminal signal peptide occupies residues 1–18 (MIKTLKRIPLVFLIAIMA). A lipid anchor (N-palmitoyl cysteine) is attached at Cys19. Cys19 carries the S-diacylglycerol cysteine lipid modification. Residues 22 to 72 (SGDNGKDKVEEQEQAQEQGEKKGQGEERDKEDGIDGLQPTFLADQDPKPDD) form a disordered region. Positions 39 to 54 (QGEKKGQGEERDKEDG) are enriched in basic and acidic residues. The region spanning 71-355 (DDKKWIKVEG…WVRVWQLEDL (285 aa)) is the GH16 domain. Residues Trp110, Glu208, and Glu213 each contribute to the substrate site. Glu208 acts as the Nucleophile in catalysis. Glu213 functions as the Proton donor in the catalytic mechanism.

This sequence belongs to the glycosyl hydrolase 16 family.

The protein localises to the cell outer membrane. It catalyses the reaction Hydrolysis of beta-D-galactopyranose-(1-&gt;4)-alpha-L-galactopyranose-6-sulfate linkages in porphyran.. In terms of biological role, cleaves the sulfated polysaccharide porphyran at the (1-&gt;4) linkages between beta-D-galactopyranose and alpha-L-galactopyranose-6-sulfate, forming mostly the disaccharide alpha-L-galactopyranose-6-sulfate-(1-&gt;3)-beta-D-galactose. This is Beta-porphyranase C (porC) from Zobellia galactanivorans (strain DSM 12802 / CCUG 47099 / CIP 106680 / NCIMB 13871 / Dsij).